The following is a 115-amino-acid chain: NADH-ubiquinone oxidoreductase chain 3 (115 aa).

M1 bears the N-formylmethionine mark. 3 helical membrane-spanning segments follow: residues 3-23 (LMLALLTNFTLATLLVIIAFW), 55-75 (FFLVAITFLLFDLEIALLLPL), and 84-104 (LNTMLTMALFLIILLAVSLAY).

As to quaternary structure, core subunit of respiratory chain NADH dehydrogenase (Complex I) which is composed of 45 different subunits. Interacts with TMEM186. Interacts with TMEM242.

It is found in the mitochondrion inner membrane. It carries out the reaction a ubiquinone + NADH + 5 H(+)(in) = a ubiquinol + NAD(+) + 4 H(+)(out). Its function is as follows. Core subunit of the mitochondrial membrane respiratory chain NADH dehydrogenase (Complex I) which catalyzes electron transfer from NADH through the respiratory chain, using ubiquinone as an electron acceptor. Essential for the catalytic activity of complex I. This is NADH-ubiquinone oxidoreductase chain 3 from Bos taurus (Bovine).